Here is a 222-residue protein sequence, read N- to C-terminus: Probable transaldolase 2 (222 aa).

K90 serves as the catalytic Schiff-base intermediate with substrate.

This sequence belongs to the transaldolase family. Type 3B subfamily.

It is found in the cytoplasm. It catalyses the reaction D-sedoheptulose 7-phosphate + D-glyceraldehyde 3-phosphate = D-erythrose 4-phosphate + beta-D-fructose 6-phosphate. It functions in the pathway carbohydrate degradation; pentose phosphate pathway; D-glyceraldehyde 3-phosphate and beta-D-fructose 6-phosphate from D-ribose 5-phosphate and D-xylulose 5-phosphate (non-oxidative stage): step 2/3. In terms of biological role, transaldolase is important for the balance of metabolites in the pentose-phosphate pathway. The sequence is that of Probable transaldolase 2 from Bacillus anthracis.